The sequence spans 819 residues: Deubiquitinase MYSM1 (819 aa).

A compositionally biased stretch (acidic residues) spans 1-12 (MEAEEADVDVEG). The disordered stretch occupies residues 1-29 (MEAEEADVDVEGDVAAAAQPGNDESTASV). Position 107 is a phosphoserine (serine 107). One can recognise an SANT domain in the interval 113-164 (SHSVKWTVEEKELFEQGLAKFGRRWTKIATLLKSRTVLQVKSYARQYFKNKV). A Glycyl lysine isopeptide (Lys-Gly) (interchain with G-Cter in SUMO2) cross-link involves residue lysine 184. Position 215 is a phosphoserine (serine 215). Disordered stretches follow at residues 228–247 (ELTS…DVPN), 260–279 (QEGP…KQGE), and 318–347 (LHRG…NEML). Polar residues predominate over residues 230–240 (TSQTSQNSGSH). A Phosphothreonine modification is found at threonine 233. Residues 318-340 (LHRGEVREEAKHSPSPEPCERQD) are compositionally biased toward basic and acidic residues. Serine 332 is subject to Phosphoserine. An SWIRM domain is found at 363-461 (LKPPEQEVEI…FGCEQAVYNR (99 aa)). Residues 568–700 (VKVAAEALLI…PLPYSQITCL (133 aa)) enclose the MPN domain. 3 residues coordinate Zn(2+): histidine 647, histidine 649, and aspartate 660. Positions 647-660 (HSHPAFDPNPSLRD) match the JAMM motif motif. The LXXLL motif signature appears at 765 to 769 (LQKLL).

This sequence belongs to the peptidase M67A family. MYSM1 subfamily. In terms of assembly, component of a large chromatin remodeling complex, at least composed of MYSM1, PCAF, RBM10 and KIF11/TRIP5. Binds histones.

It localises to the nucleus. The protein resides in the cytoplasm. Its function is as follows. Metalloprotease with deubiquitinase activity that plays important regulator roles in hematopoietic stem cell function, blood cell production and immune response. Participates in the normal programming of B-cell responses to antigen after the maturation process. Within the cytoplasm, plays critical roles in the repression of innate immunity and autoimmunity. Removes 'Lys-63'-linked polyubiquitins from TRAF3 and TRAF6 complexes. Attenuates NOD2-mediated inflammation and tissue injury by promoting 'Lys-63'-linked deubiquitination of RIPK2 component. Suppresses the CGAS-STING1 signaling pathway by cleaving STING1 'Lys-63'-linked ubiquitin chains. In the nucleus, acts as a hematopoietic transcription regulator derepressing a range of genes essential for normal stem cell differentiation including EBF1 and PAX5 in B-cells, ID2 in NK-cell progenitor or FLT3 in dendritic cell precursors. Deubiquitinates monoubiquitinated histone H2A, a specific tag for epigenetic transcriptional repression, leading to dissociation of histone H1 from the nucleosome. The chain is Deubiquitinase MYSM1 (Mysm1) from Mus musculus (Mouse).